Consider the following 729-residue polypeptide: Phosphoribosylformylglycinamidine synthase subunit PurL (729 aa).

Residue H42 is part of the active site. ATP is bound by residues Y45 and K84. E86 is a Mg(2+) binding site. Substrate contacts are provided by residues S87–H90 and R109. H88 acts as the Proton acceptor in catalysis. Position 110 (D110) interacts with Mg(2+). Substrate is bound at residue Q238. D266 contributes to the Mg(2+) binding site. Residue E310–Q312 participates in substrate binding. Residues D492 and G529 each contribute to the ATP site. N530 contacts Mg(2+). A substrate-binding site is contributed by S532.

This sequence belongs to the FGAMS family. As to quaternary structure, monomer. Part of the FGAM synthase complex composed of 1 PurL, 1 PurQ and 2 PurS subunits.

The protein resides in the cytoplasm. It carries out the reaction N(2)-formyl-N(1)-(5-phospho-beta-D-ribosyl)glycinamide + L-glutamine + ATP + H2O = 2-formamido-N(1)-(5-O-phospho-beta-D-ribosyl)acetamidine + L-glutamate + ADP + phosphate + H(+). Its pathway is purine metabolism; IMP biosynthesis via de novo pathway; 5-amino-1-(5-phospho-D-ribosyl)imidazole from N(2)-formyl-N(1)-(5-phospho-D-ribosyl)glycinamide: step 1/2. Its function is as follows. Part of the phosphoribosylformylglycinamidine synthase complex involved in the purines biosynthetic pathway. Catalyzes the ATP-dependent conversion of formylglycinamide ribonucleotide (FGAR) and glutamine to yield formylglycinamidine ribonucleotide (FGAM) and glutamate. The FGAM synthase complex is composed of three subunits. PurQ produces an ammonia molecule by converting glutamine to glutamate. PurL transfers the ammonia molecule to FGAR to form FGAM in an ATP-dependent manner. PurS interacts with PurQ and PurL and is thought to assist in the transfer of the ammonia molecule from PurQ to PurL. The sequence is that of Phosphoribosylformylglycinamidine synthase subunit PurL from Campylobacter curvus (strain 525.92).